The chain runs to 114 residues: Iron-sulfur cluster insertion protein ErpA (114 aa).

Iron-sulfur cluster-binding residues include Cys-42, Cys-106, and Cys-108.

The protein belongs to the HesB/IscA family. As to quaternary structure, homodimer. It depends on iron-sulfur cluster as a cofactor.

Required for insertion of 4Fe-4S clusters for at least IspG. The chain is Iron-sulfur cluster insertion protein ErpA from Haemophilus ducreyi (strain 35000HP / ATCC 700724).